Reading from the N-terminus, the 149-residue chain is UPF0179 protein Hlac_2319 (149 aa).

The protein belongs to the UPF0179 family.

The chain is UPF0179 protein Hlac_2319 from Halorubrum lacusprofundi (strain ATCC 49239 / DSM 5036 / JCM 8891 / ACAM 34).